The primary structure comprises 351 residues: MLFKKIRGLFSNDLSIDLGTANTLIYVKRQGIVLDEPSVVAIRQDRVGTLKSIAAVGKEAKLMLGRTPKSIVAIRPMKDGVIADFFVTEKMLQYFIKQVHSGNFMRPSPRVLVCVPAGATQVERRAIKESAIGAGAREVYLIEEPMAAAIGAKLPVSTAVGSMVIDIGGGTTEVAVISLNGIVYSSSVRIGGDRFDEAIISYVRRTFGSVIGEPTAERIKQEIGSAYIQEGDEIKEMEVHGHNLAEGAPRSFTLTSRDVLEAIQQPLNGIVAAVRTALEECQPEHAADIFERGMVLTGGGALLRNIDILLSKESGVPVIIAEDPLTCVARGGGEALEMIDMHGGDIFSDEI.

ATP contacts are provided by residues 20 to 22, 169 to 171, 217 to 220, and 299 to 302; these read TAN, GGT, ERIK, and GGAL.

This sequence belongs to the FtsA/MreB family. As to quaternary structure, forms polymers.

It is found in the cytoplasm. Forms membrane-associated dynamic filaments that are essential for cell shape determination. Acts by regulating cell wall synthesis and cell elongation, and thus cell shape. A feedback loop between cell geometry and MreB localization may maintain elongated cell shape by targeting cell wall growth to regions of negative cell wall curvature. This Haemophilus influenzae (strain ATCC 51907 / DSM 11121 / KW20 / Rd) protein is Cell shape-determining protein MreB.